The chain runs to 321 residues: Acetyl-coenzyme A carboxylase carboxyl transferase subunit alpha (321 aa).

One can recognise a CoA carboxyltransferase C-terminal domain in the interval 39-293 (RLEVKSQALT…KRALAEALRQ (255 aa)).

It belongs to the AccA family. As to quaternary structure, acetyl-CoA carboxylase is a heterohexamer composed of biotin carboxyl carrier protein (AccB), biotin carboxylase (AccC) and two subunits each of ACCase subunit alpha (AccA) and ACCase subunit beta (AccD).

The protein resides in the cytoplasm. It carries out the reaction N(6)-carboxybiotinyl-L-lysyl-[protein] + acetyl-CoA = N(6)-biotinyl-L-lysyl-[protein] + malonyl-CoA. It participates in lipid metabolism; malonyl-CoA biosynthesis; malonyl-CoA from acetyl-CoA: step 1/1. Its function is as follows. Component of the acetyl coenzyme A carboxylase (ACC) complex. First, biotin carboxylase catalyzes the carboxylation of biotin on its carrier protein (BCCP) and then the CO(2) group is transferred by the carboxyltransferase to acetyl-CoA to form malonyl-CoA. The sequence is that of Acetyl-coenzyme A carboxylase carboxyl transferase subunit alpha from Azoarcus sp. (strain BH72).